Here is a 377-residue protein sequence, read N- to C-terminus: Chaperone protein DnaJ (377 aa).

Residues 5-69 form the J domain; the sequence is EFYDRLGVSK…QKRSAYDQYG (65 aa). The segment at 133 to 215 adopts a CR-type zinc-finger fold; the sequence is GVEKDVSYHR…CHGTGHEKET (83 aa). Cys146, Cys149, Cys163, Cys166, Cys189, Cys192, Cys203, and Cys206 together coordinate Zn(2+). CXXCXGXG motif repeat units lie at residues 146–153, 163–170, 189–196, and 203–210; these read CHTCAGSG, CGRCHGSG, CDVCHGSG, and CQTCHGTG.

Belongs to the DnaJ family. In terms of assembly, homodimer. The cofactor is Zn(2+).

It is found in the cytoplasm. In terms of biological role, participates actively in the response to hyperosmotic and heat shock by preventing the aggregation of stress-denatured proteins and by disaggregating proteins, also in an autonomous, DnaK-independent fashion. Unfolded proteins bind initially to DnaJ; upon interaction with the DnaJ-bound protein, DnaK hydrolyzes its bound ATP, resulting in the formation of a stable complex. GrpE releases ADP from DnaK; ATP binding to DnaK triggers the release of the substrate protein, thus completing the reaction cycle. Several rounds of ATP-dependent interactions between DnaJ, DnaK and GrpE are required for fully efficient folding. Also involved, together with DnaK and GrpE, in the DNA replication of plasmids through activation of initiation proteins. The protein is Chaperone protein DnaJ of Streptococcus uberis (strain ATCC BAA-854 / 0140J).